A 107-amino-acid chain; its full sequence is Small leucine-rich protein 1 (107 aa).

2 helical membrane-spanning segments follow: residues 19 to 39 (AALVLSVTPMVPVGSVWLAMS) and 53 to 73 (FLFFGVFLPVTLLLLLLIAYF). Residues 85–107 (SQNCDRQHNPKDGSSLYQRMKWT) form a disordered region.

It is found in the membrane. This Homo sapiens (Human) protein is Small leucine-rich protein 1 (SMLR1).